Here is a 428-residue protein sequence, read N- to C-terminus: Isocitrate lyase 1 (428 aa).

Residue 91-93 participates in substrate binding; that stretch reads SGW. Residue Asp153 coordinates Mg(2+). Residue Cys191 is the Proton acceptor of the active site. Residues 192 to 193, Arg228, 313 to 317, and Thr347 contribute to the substrate site; these read GH and NCSPS.

This sequence belongs to the isocitrate lyase/PEP mutase superfamily. Isocitrate lyase family. In terms of assembly, homotetramer. Requires Mg(2+) as cofactor.

The catalysed reaction is D-threo-isocitrate = glyoxylate + succinate. The enzyme catalyses (2S,3R)-3-hydroxybutane-1,2,3-tricarboxylate = pyruvate + succinate. It functions in the pathway carbohydrate metabolism; glyoxylate cycle; (S)-malate from isocitrate: step 1/2. Functionally, involved in the persistence and virulence of M.tuberculosis. Catalyzes the reversible formation of succinate and glyoxylate from isocitrate, a key step of the glyoxylate cycle, which operates as an anaplerotic route for replenishing the tricarboxylic acid cycle during growth on fatty acid substrates. It also catalyzes the formation of pyruvate and succinate from 2-methylisocitrate, a key step in the methylcitrate cycle (propionate degradation route). This Mycobacterium tuberculosis (strain ATCC 35801 / TMC 107 / Erdman) protein is Isocitrate lyase 1 (icl1).